We begin with the raw amino-acid sequence, 888 residues long: Transmembrane channel-like protein 2 (888 aa).

Positions 1 to 128 are disordered; it reads MSPQLKSLDE…SLGSSVSTGD (128 aa). Residues 1-228 are Cytoplasmic-facing; that stretch reads MSPQLKSLDE…KIKDIESHFG (228 aa). Basic and acidic residues-rich tracts occupy residues 7-16, 32-44, and 87-110; these read SLDEEGDKSA, DGHR…KDPA, and RTSL…EAGK. Polar residues predominate over residues 117 to 128; that stretch reads STSLGSSVSTGD. The chain crosses the membrane as a helical span at residues 229–266; sequence SSVASYFIFLRWMYGVNLVLFGLIFGLVIIPEVLMGMP. Residues 267–317 lie on the Extracellular side of the membrane; sequence YGSIPRKTVPRAEEERAMDFSVLWDFEGYIKYSALFYGYYNNQRTIGWLRY. Residues 318 to 350 traverse the membrane as a helical segment; sequence RLPMAYFMVGVSVFGYSLMIVIRSMASNTQGST. Residues 351 to 406 are Cytoplasmic-facing; sequence SEGDSDSFTFSFKMFTSWDYLIGNSETADNKYVSITTSFKESIVDEQESNKEGNIH. The helical transmembrane segment at 407–437 threads the bilayer; sequence LTRFLRVLANFLILCCLCGSGYLIYFVVKRS. The Extracellular segment spans residues 438–447; the sequence is QEFSKMQNVS. A helical membrane pass occupies residues 448-475; that stretch reads WYERNEVEIVMSLLGMFCPPLFETIAAL. At 476 to 479 the chain is on the cytoplasmic side; the sequence is ENYH. The chain crosses the membrane as a helical span at residues 480-514; it reads PRTGLKWQLGRIFALFLGNLYTFLLALMDDVHLKL. The Extracellular portion of the chain corresponds to 515–556; it reads SNEEKIKNITHWTLFNYYNSSGGNESVPRPPPHPADVPRGSC. The chain crosses the membrane as a helical span at residues 557–594; the sequence is WETAVGIEFMRLTVSDMLVTYLTILVGDFLRACFVRFM. Residues 595–613 lie on the Cytoplasmic side of the membrane; that stretch reads NHCWCWDLEAGFPSYAEFD. A helical transmembrane segment spans residues 614-634; it reads ISGNVLGLIFNQGMIWMGSFY. The Extracellular portion of the chain corresponds to 635–637; it reads APG. Residues 638-660 traverse the membrane as a helical segment; sequence LVGINVLRLLTSMYFQCWAVMSS. Residues 661 to 674 lie on the Cytoplasmic side of the membrane; sequence NVPHERVFKASRSN. A helical membrane pass occupies residues 675 to 698; sequence NFYMGLLLLVLFLSLLPVAYTVMS. Residues 699–741 are Extracellular-facing; it reads LPPSFDCGPFSGKNRMYDVLHETIENDFPKFLGKIFAFLANPG. Residues 742-775 traverse the membrane as a helical segment; the sequence is LIIPAILLMFLAIYYLNSVSKSLSRANAQLRKKI. At 776 to 888 the chain is on the cytoplasmic side; that stretch reads QALREVEKNH…SGKRTQRPHN (113 aa). Residues 813–888 are disordered; sequence LTKEEPTSHS…SGKRTQRPHN (76 aa). 2 stretches are compositionally biased toward polar residues: residues 836–851 and 866–881; these read PHTS…STSW and GQPQ…PSGK.

It belongs to the TMC family. As to quaternary structure, forms the MET channel composed of TMC dimer (TMC1 or TMC2), TMIE, TOMT, CIB (CIB2 or CIB3), LHFPL5 and PDH15. The interaction of TMC1 and TMC2 with TOMT is required for the transportation of TMC1/2 into the stereocilia of hair cells. Interacts (via N-terminus) with both isoforms CD1 and CD3 of PCDH15. Can form a heterodimer with TMC1, TMC5 or TMC7. In terms of tissue distribution, inner ear and testis. Expressed in cochlear inner and outer hair cells and vestibular organ hair cells.

The protein resides in the cell membrane. It carries out the reaction Ca(2+)(in) = Ca(2+)(out). Its function is as follows. Pore-forming subunit of the mechanotransducer (MET) non-selective cation channel complex located at the tips of stereocilia of cochlear hair cells and that mediates sensory transduction in the auditory system. The MET complex is composed of two dimeric pore-forming ion-conducting transmembrane TMC (TMC1 or TMC2) subunits, several auxiliary proteins including LHFPL5, TMIE, CIB2/3 and TOMT, the tip-link PCDH15, and possibly the PIEZO subunits. MET channel is activated by tension in the tip-link extending from the side wall of one stereocilium to the tip of the adjacent shorter stereocilium, where the channel is located. TMC2 MET channel is highly permeable to calcium and likely transports monovalent cations. Also involved in vestibular hair cell transduction current of the mammalian inner ear. The polypeptide is Transmembrane channel-like protein 2 (Mus musculus (Mouse)).